Reading from the N-terminus, the 296-residue chain is Acetylglutamate kinase (296 aa).

Residues 69–70 (GG), Arg91, and Asn193 contribute to the substrate site.

This sequence belongs to the acetylglutamate kinase family. ArgB subfamily.

Its subcellular location is the cytoplasm. It carries out the reaction N-acetyl-L-glutamate + ATP = N-acetyl-L-glutamyl 5-phosphate + ADP. It participates in amino-acid biosynthesis; L-arginine biosynthesis; N(2)-acetyl-L-ornithine from L-glutamate: step 2/4. Catalyzes the ATP-dependent phosphorylation of N-acetyl-L-glutamate. The chain is Acetylglutamate kinase from Paracidovorax citrulli (strain AAC00-1) (Acidovorax citrulli).